The chain runs to 425 residues: Aromatic prenyl transferase PC-22 (425 aa).

L-tryptophan-binding positions include G83–I84 and E92. Residues R107, K198, Y200, R265, K267, Y269, Y345, Y410, and Y414 each contribute to the substrate site.

This sequence belongs to the tryptophan dimethylallyltransferase family. In terms of assembly, homodimer.

Its pathway is secondary metabolite biosynthesis. Its function is as follows. Aromatic prenyl transferase; part of the gene cluster that mediates the biosynthesis of the indole diterpenes penitrems. The geranylgeranyl diphosphate (GGPP) synthase penG catalyzes the first step in penitrem biosynthesis via conversion of farnesyl pyrophosphate and isopentyl pyrophosphate into geranylgeranyl pyrophosphate (GGPP). Condensation of indole-3-glycerol phosphate with GGPP by the prenyl transferase penC then forms 3-geranylgeranylindole (3-GGI). Epoxidation by the FAD-dependent monooxygenase penM leads to a epoxidized-GGI that is substrate of the terpene cyclase penB for cyclization to yield paspaline. Paspaline is subsequently converted to 13-desoxypaxilline by the cytochrome P450 monooxygenase penP, the latter being then converted to paxilline by the cytochrome P450 monooxygenase penQ. Paxilline is converted to beta-paxitriol via C-10 ketoreduction by the short-chain dehydrogenase PC-15 which can be monoprenylated at the C-20 by the indole diterpene prenyltransferase penD. A two-step elimination (acetylation and elimination) process performed by the O-acetyltransferase PC-16 and the P.simplicissimum ptmI-ortholog not yet identified in P.crustosum, leads to the production of the prenylated form of penijanthine. The FAD-linked oxidoreductase ptmO then converts the prenylated form of penijanthine into PC-M5 which is in turn transformed into PC-M4 by the aromatic dimethylallyltransferase PC-22. A series of oxidation steps involving 4 cytochrome P450 monooxygenases (PC-21, PC-05, PC-23, PC-20) and a FAD-dependent monooxygenase (PC-14) are required for the transformation of PC-M4 to penitrems A and E. Synthesis of these final products is proposed to proceed via penitrems D and C (PC-21, PC-05, PC-14) and penitrems B and F (PC-21, PC-05, PC-14, PC-23). The polypeptide is Aromatic prenyl transferase PC-22 (Penicillium crustosum (Blue mold fungus)).